The primary structure comprises 397 residues: DNA-directed RNA polymerase subunit Rpo1C (397 aa).

This sequence belongs to the RNA polymerase beta' chain family. In terms of assembly, part of the RNA polymerase complex.

Its subcellular location is the cytoplasm. The enzyme catalyses RNA(n) + a ribonucleoside 5'-triphosphate = RNA(n+1) + diphosphate. Its function is as follows. DNA-dependent RNA polymerase (RNAP) catalyzes the transcription of DNA into RNA using the four ribonucleoside triphosphates as substrates. Forms part of the jaw domain. The protein is DNA-directed RNA polymerase subunit Rpo1C of Methanococcus aeolicus (strain ATCC BAA-1280 / DSM 17508 / OCM 812 / Nankai-3).